The chain runs to 350 residues: Protein XRP2 (350 aa).

Residues 1–10 (MGCFFSKRRK) are compositionally biased toward basic residues. A disordered region spans residues 1 to 31 (MGCFFSKRRKADKESRPENEEERPKQYSWDQ). Residue Gly-2 is the site of N-myristoyl glycine attachment. The S-palmitoyl cysteine moiety is linked to residue Cys-3. Positions 11–31 (ADKESRPENEEERPKQYSWDQ) are enriched in basic and acidic residues. The 156-residue stretch at 24–179 (PKQYSWDQRE…TWSNIHDFTP (156 aa)) folds into the C-CAP/cofactor C-like domain. GTP-binding positions include 98–99 (GS) and 115–118 (QQFR).

This sequence belongs to the TBCC family. Found in a complex with ARL3, RP2 and UNC119 (or UNC119B); RP2 induces hydrolysis of GTP ARL3 in the complex, leading to the release of UNC119 (or UNC119B). Interacts with ARL3; interaction is direct and stimulated with the activated GTP-bound form of ARL3. Post-translationally, myristoylated on Gly-2; which may be required for membrane targeting. In terms of processing, palmitoylated on Cys-3; which may be required for plasma membrane targeting. Mutation of Cys-3 targets the protein to internal membranes. In terms of tissue distribution, ubiquitous. Expressed in the rod and cone photoreceptors, extending from the tips of the outer segment (OS) through the inner segment (IS) and outer nuclear layer (ONL) and into the synaptic terminals of the outer plexiform layer (ONL). Also detected in the bipolar, horizontal and amacrine cells in the inner nuclear layer (INL), extending to the inner plexiform layer (IPL) and though the ganglion cell layer (GCL) and into the nerve fiber layer (NFL) (at protein level).

The protein resides in the cell membrane. Its subcellular location is the cell projection. It is found in the cilium. Acts as a GTPase-activating protein (GAP) involved in trafficking between the Golgi and the ciliary membrane. Involved in localization of proteins, such as NPHP3, to the cilium membrane by inducing hydrolysis of GTP ARL3, leading to the release of UNC119 (or UNC119B). Acts as a GTPase-activating protein (GAP) for tubulin in concert with tubulin-specific chaperone C, but does not enhance tubulin heterodimerization. Acts as a guanine nucleotide dissociation inhibitor towards ADP-ribosylation factor-like proteins. In Homo sapiens (Human), this protein is Protein XRP2 (RP2).